The chain runs to 490 residues: Aspartyl/glutamyl-tRNA(Asn/Gln) amidotransferase subunit B (490 aa).

The protein belongs to the GatB/GatE family. GatB subfamily. As to quaternary structure, heterotrimer of A, B and C subunits.

The enzyme catalyses L-glutamyl-tRNA(Gln) + L-glutamine + ATP + H2O = L-glutaminyl-tRNA(Gln) + L-glutamate + ADP + phosphate + H(+). It carries out the reaction L-aspartyl-tRNA(Asn) + L-glutamine + ATP + H2O = L-asparaginyl-tRNA(Asn) + L-glutamate + ADP + phosphate + 2 H(+). Allows the formation of correctly charged Asn-tRNA(Asn) or Gln-tRNA(Gln) through the transamidation of misacylated Asp-tRNA(Asn) or Glu-tRNA(Gln) in organisms which lack either or both of asparaginyl-tRNA or glutaminyl-tRNA synthetases. The reaction takes place in the presence of glutamine and ATP through an activated phospho-Asp-tRNA(Asn) or phospho-Glu-tRNA(Gln). The chain is Aspartyl/glutamyl-tRNA(Asn/Gln) amidotransferase subunit B from Synechococcus sp. (strain JA-3-3Ab) (Cyanobacteria bacterium Yellowstone A-Prime).